The following is a 293-amino-acid chain: MSALDNRLFAKMNGIGNEIVVVDLRDQPAPVTPDDARAVAAHVPYDQLMLLQPARLPGTEAFVRIYNNDGSESGACGNGMRCVARQLFAGSDQQGLTFETRAGLLNCWRGPAEGLFTVDMGAPKFGWQDIPLAEEFRDTRGIELQIGPIDAPILHTPSVVSMGNPHAIFWVDDIHAYDLGQFGPLLENHPIFPERANITLAHIVDRQHITMRTWERGAGLTRACGSAACATAVAAARLRRTDRIVEMTLPGGKLTIEWREGDDHVLMTGGAELEFEGRFDPALFVGACDTTAA.

Residues Asn17, Gln47, and Asn67 each contribute to the substrate site. Cys76 acts as the Proton donor in catalysis. Substrate is bound by residues 77–78 (GN), Asn164, Asn197, and 215–216 (ER). Cys224 functions as the Proton acceptor in the catalytic mechanism. 225–226 (GS) contacts substrate.

It belongs to the diaminopimelate epimerase family. As to quaternary structure, homodimer.

It is found in the cytoplasm. The enzyme catalyses (2S,6S)-2,6-diaminopimelate = meso-2,6-diaminopimelate. Its pathway is amino-acid biosynthesis; L-lysine biosynthesis via DAP pathway; DL-2,6-diaminopimelate from LL-2,6-diaminopimelate: step 1/1. Its function is as follows. Catalyzes the stereoinversion of LL-2,6-diaminopimelate (L,L-DAP) to meso-diaminopimelate (meso-DAP), a precursor of L-lysine and an essential component of the bacterial peptidoglycan. This is Diaminopimelate epimerase from Rhodopseudomonas palustris (strain HaA2).